Here is a 320-residue protein sequence, read N- to C-terminus: MSTKNFRVSDGDWICPDKKCGNVNFARRTSCNRCGREKTTEAKMMKAGGTEIGKTLAEKSRGLFSANDWQCKTCSNVNWARRSECNMCNTPKYAKLEERTGYGGGFNERENVEYIEREESDGEYDEFGRKKKKYRGKAVGPASILKEVEDKESEGEEEDEDEDLSKYKLDEDEDEDDADLSKYNLDASEEEDSNKKKSNRRSRSKSRSSHSRSSSRSSSPSSSRSRSRSRSRSSSSSQSRSRSSSRERSRSRGSKSRSSSRSHRGSSSPRKRSYSSSSSSPERNRKRSRSRSSSSGDRKKRRTRSRSPESQVIGENTKQP.

S9 is subject to Phosphoserine. The RanBP2-type 1 zinc-finger motif lies at 9 to 40 (SDGDWICPDKKCGNVNFARRTSCNRCGREKTT). K18, K54, and K92 each carry N6-acetyllysine. A RanBP2-type 2 zinc finger spans residues 65 to 94 (SANDWQCKTCSNVNWARRSECNMCNTPKYA). The segment at 117–320 (REESDGEYDE…QVIGENTKQP (204 aa)) is disordered. S120, S153, S181, S188, and S193 each carry phosphoserine. A compositionally biased stretch (acidic residues) spans 150 to 163 (DKESEGEEEDEDED). The segment at 151–320 (KESEGEEEDE…QVIGENTKQP (170 aa)) is required for nuclear targeting. Positions 196–210 (KKSNRRSRSKSRSSH) are enriched in basic residues. Composition is skewed to low complexity over residues 211-224 (SRSSSRSSSPSSSR) and 232-242 (RSSSSSQSRSR). A compositionally biased stretch (basic residues) spans 251–273 (SRGSKSRSSSRSHRGSSSPRKRS).

The protein belongs to the ZRANB2 family. As to quaternary structure, interacts with the C-terminal half of SNRP70/U1-70K, the Arg/Ser-rich domain of AKAP17A as well as with U2AF1 and CLK1. Post-translationally, phosphorylated on Ser-310 upon DNA damage, probably by ATM or ATR.

The protein localises to the nucleus. Splice factor required for alternative splicing of TRA2B/SFRS10 transcripts. Binds to ssRNA containing the consensus sequence 5'-AGGUAA-3'. May interfere with constitutive 5'-splice site selection. The chain is Zinc finger Ran-binding domain-containing protein 2 from Pongo abelii (Sumatran orangutan).